Consider the following 188-residue polypeptide: dCTP deaminase (188 aa).

Residues 111–116 (KSTYAR), 135–137 (TLE), Q156, Y170, and Q180 contribute to the dCTP site. E137 (proton donor/acceptor) is an active-site residue.

Belongs to the dCTP deaminase family. In terms of assembly, homotrimer.

The catalysed reaction is dCTP + H2O + H(+) = dUTP + NH4(+). The protein operates within pyrimidine metabolism; dUMP biosynthesis; dUMP from dCTP (dUTP route): step 1/2. Functionally, catalyzes the deamination of dCTP to dUTP. In Pseudomonas savastanoi pv. phaseolicola (strain 1448A / Race 6) (Pseudomonas syringae pv. phaseolicola (strain 1448A / Race 6)), this protein is dCTP deaminase.